The following is an 865-amino-acid chain: Xylosyltransferase 2 (865 aa).

At 1 to 15 the chain is on the cytoplasmic side; sequence MVASARVQKLVRRYK. The helical; Signal-anchor for type II membrane protein transmembrane segment at 16–36 threads the bilayer; that stretch reads LAIATALAILLLQGLVVWSFS. The Lumenal portion of the chain corresponds to 37-865; it reads GLEEDEPGEK…GPVKADGRLR (829 aa). A disordered region spans residues 39 to 157; sequence EEDEPGEKGR…EGAPQPTDNG (119 aa). A compositionally biased stretch (basic and acidic residues) spans 53–65; the sequence is RPLDPGEGSKDTD. Residues 73–82 show a composition bias toward basic residues; that stretch reads SAGRRHGRWR. The N-linked (GlcNAc...) asparagine glycan is linked to Asn122. The segment covering 125 to 137 has biased composition (low complexity); it reads GAAAGEALVGAAG. 4 disulfides stabilise this stretch: Cys162/Cys190, Cys206/Cys448, Cys467/Cys480, and Cys469/Cys478. UDP-alpha-D-xylose-binding positions include Val239, Asp267, and 296–298; that span reads TIW. Residue Asn327 is glycosylated (N-linked (GlcNAc...) asparagine). 400-401 is a UDP-alpha-D-xylose binding site; sequence DW. UDP-alpha-D-xylose contacts are provided by residues Ser481 and 504 to 505; that span reads RK. 2 disulfides stabilise this stretch: Cys581/Cys833 and Cys826/Cys839. Asn683 carries N-linked (GlcNAc...) asparagine glycosylation.

It belongs to the glycosyltransferase 14 family. XylT subfamily. As to quaternary structure, monomer. It depends on Mg(2+) as a cofactor. The cofactor is Mn(2+). In terms of processing, contains disulfide bonds.

The protein resides in the golgi apparatus membrane. It localises to the secreted. It catalyses the reaction UDP-alpha-D-xylose + L-seryl-[protein] = 3-O-(beta-D-xylosyl)-L-seryl-[protein] + UDP + H(+). The protein operates within glycan metabolism; chondroitin sulfate biosynthesis. It functions in the pathway glycan metabolism; heparan sulfate biosynthesis. Catalyzes the first step in the biosynthesis of chondroitin sulfate, heparan sulfate and dermatan sulfate proteoglycans, such as DCN. Transfers D-xylose from UDP-D-xylose to specific serine residues of the core protein. This chain is Xylosyltransferase 2 (XYLT2), found in Canis lupus familiaris (Dog).